The following is a 296-amino-acid chain: Probable GTP 3',8-cyclase (296 aa).

A Radical SAM core domain is found at E5–K230. Residue R14 coordinates GTP. [4Fe-4S] cluster-binding residues include C21 and C25. Y27 contributes to the S-adenosyl-L-methionine binding site. Residue C28 participates in [4Fe-4S] cluster binding. K61 contributes to the GTP binding site. G65 is an S-adenosyl-L-methionine binding site. GTP is bound at residue T89. S113 is an S-adenosyl-L-methionine binding site. K150 is a GTP binding site. Residues C245 and C248 each coordinate [4Fe-4S] cluster. R250–R252 is a binding site for GTP. C262 is a binding site for [4Fe-4S] cluster.

It belongs to the radical SAM superfamily. MoaA family. The cofactor is [4Fe-4S] cluster.

It catalyses the reaction GTP + AH2 + S-adenosyl-L-methionine = (8S)-3',8-cyclo-7,8-dihydroguanosine 5'-triphosphate + 5'-deoxyadenosine + L-methionine + A + H(+). It participates in cofactor biosynthesis; molybdopterin biosynthesis. In terms of biological role, catalyzes the cyclization of GTP to (8S)-3',8-cyclo-7,8-dihydroguanosine 5'-triphosphate. This chain is Probable GTP 3',8-cyclase, found in Archaeoglobus fulgidus (strain ATCC 49558 / DSM 4304 / JCM 9628 / NBRC 100126 / VC-16).